A 510-amino-acid chain; its full sequence is Glycosyl hydrolase YngK (510 aa).

A signal peptide spans 1–30 (MKVCQKSIVRFLVSLIIGTFVISVPFMANA).

Belongs to the glycosyl hydrolase-like 10 (GHL10) family.

The polypeptide is Glycosyl hydrolase YngK (yngK) (Bacillus subtilis (strain 168)).